Reading from the N-terminus, the 167-residue chain is Glutathione peroxidase-like peroxiredoxin 1 (167 aa).

C36 (cysteine sulfenic acid (-SOH) intermediate) is an active-site residue. Residues C36 and C82 are joined by a disulfide bond.

It belongs to the glutathione peroxidase family. In terms of assembly, monomer.

It is found in the peroxisome matrix. It localises to the mitochondrion outer membrane. It catalyses the reaction 2 glutathione + H2O2 = glutathione disulfide + 2 H2O. It carries out the reaction a hydroperoxide + [thioredoxin]-dithiol = an alcohol + [thioredoxin]-disulfide + H2O. In terms of biological role, glutathione peroxidase-like protein that protects cells from phospholipid hydroperoxides and nonphospholipid peroxides during oxidative stress. Has peroxidase activity using thioredoxin or glutathione as a reducing power. Involved in peroxisome formation. The polypeptide is Glutathione peroxidase-like peroxiredoxin 1 (Saccharomyces cerevisiae (strain ATCC 204508 / S288c) (Baker's yeast)).